Here is a 121-residue protein sequence, read N- to C-terminus: Small ribosomal subunit protein uS13 (121 aa).

A disordered region spans residues 96 to 121; the sequence is PVRGQNTKNNARTRKGKAVAIAGKKK. Over residues 106–121 the composition is skewed to basic residues; the sequence is ARTRKGKAVAIAGKKK.

Belongs to the universal ribosomal protein uS13 family. In terms of assembly, part of the 30S ribosomal subunit. Forms a loose heterodimer with protein S19. Forms two bridges to the 50S subunit in the 70S ribosome.

In terms of biological role, located at the top of the head of the 30S subunit, it contacts several helices of the 16S rRNA. In the 70S ribosome it contacts the 23S rRNA (bridge B1a) and protein L5 of the 50S subunit (bridge B1b), connecting the 2 subunits; these bridges are implicated in subunit movement. Contacts the tRNAs in the A and P-sites. In Streptococcus agalactiae serotype Ia (strain ATCC 27591 / A909 / CDC SS700), this protein is Small ribosomal subunit protein uS13.